We begin with the raw amino-acid sequence, 121 residues long: Large ribosomal subunit protein uL14 (121 aa).

The protein belongs to the universal ribosomal protein uL14 family. In terms of assembly, part of the 50S ribosomal subunit. Forms a cluster with proteins L3 and L19. In the 70S ribosome, L14 and L19 interact and together make contacts with the 16S rRNA in bridges B5 and B8.

Binds to 23S rRNA. Forms part of two intersubunit bridges in the 70S ribosome. This chain is Large ribosomal subunit protein uL14, found in Akkermansia muciniphila (strain ATCC BAA-835 / DSM 22959 / JCM 33894 / BCRC 81048 / CCUG 64013 / CIP 107961 / Muc).